The primary structure comprises 65 residues: Small ribosomal subunit protein eS27 (65 aa).

Zn(2+)-binding residues include C20, C23, C39, and C42. The C4-type zinc finger occupies C20–C42.

It belongs to the eukaryotic ribosomal protein eS27 family. As to quaternary structure, part of the 30S ribosomal subunit. The cofactor is Zn(2+).

This is Small ribosomal subunit protein eS27 from Thermococcus kodakarensis (strain ATCC BAA-918 / JCM 12380 / KOD1) (Pyrococcus kodakaraensis (strain KOD1)).